A 197-amino-acid chain; its full sequence is Adenylyl-sulfate kinase (197 aa).

31–38 contacts ATP; it reads GLSGAGKS. The Phosphoserine intermediate role is filled by S105.

This sequence belongs to the APS kinase family.

The catalysed reaction is adenosine 5'-phosphosulfate + ATP = 3'-phosphoadenylyl sulfate + ADP + H(+). It functions in the pathway sulfur metabolism; hydrogen sulfide biosynthesis; sulfite from sulfate: step 2/3. Catalyzes the synthesis of activated sulfate. The chain is Adenylyl-sulfate kinase from Aeromonas hydrophila subsp. hydrophila (strain ATCC 7966 / DSM 30187 / BCRC 13018 / CCUG 14551 / JCM 1027 / KCTC 2358 / NCIMB 9240 / NCTC 8049).